The following is a 457-amino-acid chain: Argininosuccinate lyase (457 aa).

It belongs to the lyase 1 family. Argininosuccinate lyase subfamily.

It is found in the cytoplasm. It catalyses the reaction 2-(N(omega)-L-arginino)succinate = fumarate + L-arginine. It functions in the pathway amino-acid biosynthesis; L-arginine biosynthesis; L-arginine from L-ornithine and carbamoyl phosphate: step 3/3. This chain is Argininosuccinate lyase, found in Psychrobacter cryohalolentis (strain ATCC BAA-1226 / DSM 17306 / VKM B-2378 / K5).